Reading from the N-terminus, the 474-residue chain is Aspartyl protease family protein At5g10770 (474 aa).

The first 25 residues, M1–G25, serve as a signal peptide directing secretion. One can recognise a Peptidase A1 domain in the interval Y132 to A469. Residues D150 and D352 contribute to the active site. A disulfide bridge connects residues C391 and C432. N443 is lipidated: GPI-anchor amidated asparagine. Residues A444–S474 constitute a propeptide, removed in mature form.

This sequence belongs to the peptidase A1 family.

Its subcellular location is the cell membrane. Functionally, probably not redundant with AED1 and not involved in restriction of salicylic acid (SA) or systemic acquired resistance (SAR) signaling. This is Aspartyl protease family protein At5g10770 from Arabidopsis thaliana (Mouse-ear cress).